A 170-amino-acid polypeptide reads, in one-letter code: dCTP pyrophosphatase 1 (170 aa).

Residues 1-27 (MSVAGGEIRGDTGGEDTAAPGRFSFSP) are disordered. The residue at position 2 (serine 2) is an N-acetylserine. Serine 2 carries the phosphoserine modification. Threonine 12 bears the Phosphothreonine mark. Substrate-binding positions include histidine 38 and 47-51 (WEQFH). Mg(2+) is bound by residues glutamate 63 and glutamate 66. Position 73 (tryptophan 73) interacts with substrate. Position 85 is a phosphoserine (serine 85). The Mg(2+) site is built by glutamate 95 and aspartate 98. Tyrosine 102 provides a ligand contact to substrate. Residues 147-170 (GAISEDQAVGPADIPCDSTGQTST) form a disordered region.

As to quaternary structure, homotetramer. The cofactor is Mg(2+).

The protein resides in the mitochondrion. The protein localises to the nucleus. It is found in the cytoplasm. It localises to the cytosol. The enzyme catalyses dCTP + H2O = dCMP + diphosphate + H(+). Inhibited by the reaction end product PPi. Inhibited by dCDP. Inhibited by triptolide. Its function is as follows. Hydrolyzes deoxynucleoside triphosphates (dNTPs) to the corresponding nucleoside monophosphates. Has a strong preference for dCTP and its analogs including 5-iodo-dCTP and 5-methyl-dCTP for which it may even have a higher efficiency. May protect DNA or RNA against the incorporation of these genotoxic nucleotide analogs through their catabolism. The polypeptide is dCTP pyrophosphatase 1 (Homo sapiens (Human)).